A 440-amino-acid chain; its full sequence is 3-phosphoshikimate 1-carboxyvinyltransferase (440 aa).

The 3-phosphoshikimate site is built by Lys-28, Ser-29, and Arg-33. Lys-28 lines the phosphoenolpyruvate pocket. Phosphoenolpyruvate contacts are provided by Gly-98 and Arg-126. 3-phosphoshikimate contacts are provided by Ser-171, Gln-173, Asp-318, and Lys-345. Position 173 (Gln-173) interacts with phosphoenolpyruvate. The active-site Proton acceptor is Asp-318. Phosphoenolpyruvate-binding residues include Arg-349 and Arg-391.

The protein belongs to the EPSP synthase family. As to quaternary structure, monomer.

It localises to the cytoplasm. The catalysed reaction is 3-phosphoshikimate + phosphoenolpyruvate = 5-O-(1-carboxyvinyl)-3-phosphoshikimate + phosphate. It participates in metabolic intermediate biosynthesis; chorismate biosynthesis; chorismate from D-erythrose 4-phosphate and phosphoenolpyruvate: step 6/7. Catalyzes the transfer of the enolpyruvyl moiety of phosphoenolpyruvate (PEP) to the 5-hydroxyl of shikimate-3-phosphate (S3P) to produce enolpyruvyl shikimate-3-phosphate and inorganic phosphate. The chain is 3-phosphoshikimate 1-carboxyvinyltransferase from Anaeromyxobacter sp. (strain K).